Consider the following 207-residue polypeptide: Dephospho-CoA kinase (207 aa).

The DPCK domain maps to 10-207 (ILGLTGGIGS…FYLTLRGGQP (198 aa)). Position 18 to 23 (18 to 23 (GSGKSA)) interacts with ATP.

The protein belongs to the CoaE family.

Its subcellular location is the cytoplasm. It catalyses the reaction 3'-dephospho-CoA + ATP = ADP + CoA + H(+). Its pathway is cofactor biosynthesis; coenzyme A biosynthesis; CoA from (R)-pantothenate: step 5/5. Catalyzes the phosphorylation of the 3'-hydroxyl group of dephosphocoenzyme A to form coenzyme A. The sequence is that of Dephospho-CoA kinase from Pseudomonas putida (Arthrobacter siderocapsulatus).